The following is a 597-amino-acid chain: FERM domain-containing protein 3 (597 aa).

The 281-residue stretch at 32–312 (MRCTIRLLDD…ENQAFYKYAK (281 aa)) folds into the FERM domain. A disordered region spans residues 383 to 403 (LLPSPSEQEEELPLGEGVPLP). A helical membrane pass occupies residues 531–551 (LLVVGLGLLLFVFPLLLLLLE).

Ovary-specific.

Its subcellular location is the membrane. In terms of biological role, putative tumor suppressor gene that may be implicated in the origin and progression of lung cancer. This chain is FERM domain-containing protein 3 (FRMD3), found in Homo sapiens (Human).